The following is a 276-amino-acid chain: Putative pyridoxine kinase (276 aa).

Residue asparagine 139 coordinates ATP. Glutamate 142 serves as a coordination point for Mg(2+). ATP contacts are provided by residues 176–180 (KGGKA), aspartate 188, glycine 213, and lysine 238.

The protein belongs to the ThiD family.

It catalyses the reaction pyridoxal + ATP = pyridoxal 5'-phosphate + ADP + H(+). Functionally, phosphorylates B6 vitamers; functions in a salvage pathway. Uses pyridoxal, pyridoxine, and pyridoxamine as substrates. The protein is Putative pyridoxine kinase (pdxK) of Staphylococcus epidermidis (strain ATCC 35984 / DSM 28319 / BCRC 17069 / CCUG 31568 / BM 3577 / RP62A).